A 291-amino-acid chain; its full sequence is Beta-lactamase CTX-M-8 (291 aa).

Residues 1-30 form the signal peptide; sequence MMRHRVKRMMLMTTACISLLLGSAPLYAQA. Serine 73 (nucleophile; acyl-ester intermediate) is an active-site residue. Lysine 76, serine 133, glutamate 169, and serine 240 together coordinate a beta-lactam.

The protein belongs to the class-A beta-lactamase family. Monomer.

The protein resides in the secreted. It carries out the reaction a beta-lactam + H2O = a substituted beta-amino acid. Inhibited by the beta-lactamase-blocking agents clavulanic acid, tazobactam and sulbactam; in the DH5alpha strain of E.coli. In terms of biological role, extended-spectrum beta-lactamase (ESBL) which confers resistance to penicillins, as well as first, third and fourth-generation cephalosporins. Has cefotaxime-hydrolyzing activity. Inactive against cephalosporin antibiotic, cefoxitin, and the carbapenem, imipenem. The protein is Beta-lactamase CTX-M-8 of Citrobacter amalonaticus.